The sequence spans 169 residues: uncharacterized protein (169 aa).

The HD domain occupies 18-130; sequence VVEHCLAVSE…VAHADNLIFG (113 aa).

This is an uncharacterized protein from Methanocaldococcus jannaschii (strain ATCC 43067 / DSM 2661 / JAL-1 / JCM 10045 / NBRC 100440) (Methanococcus jannaschii).